We begin with the raw amino-acid sequence, 349 residues long: MSQSGEKVKFSDSAGYVGFANLPNQVHRKSVKKGFEFTLMVVGESGLGKSTLINSLFLTDLYPERYIPGAAEKIERTVQIEASTVEIEERGVKLRLTVVDTPGYGDAINSQDCFKTIIQYIDNQFERYLHDESGLNRRHIIDNRVHCCFYFISPFGHGLKPLDVEFMKALHGKVNIVPVIAKADTLTLKERERLKRRVLDEISEHGIRIYQLPDADSDEDEEFKEQTRVLKASIPFAVIGSNQLIEVKGKKIRGRLYPWGVVEVENPEHNDFLKLRTMLVTHMQDLQEVTQDLHYENFRSERLKRTGKPVEEEVVDKDRILQQKEAELRRMQEMIAQMQAQMRMKPGDD.

The Septin-type G domain occupies 33 to 305; that stretch reads KGFEFTLMVV…ENFRSERLKR (273 aa). Positions 43 to 50 are G1 motif; sequence GESGLGKS. Residues 43–50, Thr-77, Gly-103, 182–190, Gly-240, and Arg-255 each bind GTP; these read GESGLGKS and KADTLTLKE. The segment at 100 to 103 is G3 motif; that stretch reads DTPG. Residues 181 to 184 form a G4 motif region; sequence AKAD. Residues 259 to 269 form an important for dimerization region; that stretch reads WGVVEVENPEH.

This sequence belongs to the TRAFAC class TrmE-Era-EngA-EngB-Septin-like GTPase superfamily. Septin GTPase family. As to quaternary structure, septins polymerize into heterooligomeric protein complexes that form filaments, and associate with cellular membranes, actin filaments and microtubules. GTPase activity is required for filament formation. Can form heterooligomers with other family members and form filaments.

Its subcellular location is the cytoplasm. The protein resides in the cytoskeleton. It localises to the spindle. The protein localises to the cleavage furrow. It is found in the midbody. Its subcellular location is the cell cortex. The protein resides in the cell projection. It localises to the cilium membrane. Its function is as follows. Filament-forming cytoskeletal GTPase. Required for normal organization of the actin cytoskeleton. Plays a role in the biogenesis of polarized columnar-shaped epithelium by maintaining polyglutamylated microtubules, thus facilitating efficient vesicle transport, and by impeding MAP4 binding to tubulin. Required for the progression through mitosis. Forms a scaffold at the midplane of the mitotic splindle required to maintain CENPE localization at kinetochores and consequently chromosome congression. During anaphase, may be required for chromosome segregation and spindle elongation. Plays a role in ciliogenesis and collective cell movements. In cilia, required for the integrity of the diffusion barrier at the base of the primary cilium that prevents diffusion of transmembrane proteins between the cilia and plasma membranes. The sequence is that of Septin-2 from Gallus gallus (Chicken).